A 329-amino-acid polypeptide reads, in one-letter code: Phosphate acyltransferase (329 aa).

It belongs to the PlsX family. In terms of assembly, homodimer. Probably interacts with PlsY.

It is found in the cytoplasm. The enzyme catalyses a fatty acyl-[ACP] + phosphate = an acyl phosphate + holo-[ACP]. It functions in the pathway lipid metabolism; phospholipid metabolism. Functionally, catalyzes the reversible formation of acyl-phosphate (acyl-PO(4)) from acyl-[acyl-carrier-protein] (acyl-ACP). This enzyme utilizes acyl-ACP as fatty acyl donor, but not acyl-CoA. This Exiguobacterium sp. (strain ATCC BAA-1283 / AT1b) protein is Phosphate acyltransferase.